The primary structure comprises 205 residues: Allergen Asp f 15 homolog (205 aa).

Belongs to the cerato-platanin family.

The protein localises to the secreted. In Arthroderma benhamiae (strain ATCC MYA-4681 / CBS 112371) (Trichophyton mentagrophytes), this protein is Allergen Asp f 15 homolog.